The chain runs to 103 residues: U6 snRNA-associated Sm-like protein LSm7 (103 aa).

Ala-2 is modified (N-acetylalanine). In terms of domain architecture, Sm spans 10–90 (ESILDLSKYI…VVLICPQDGM (81 aa)).

It belongs to the snRNP Sm proteins family. As to quaternary structure, component of the precatalytic spliceosome (spliceosome B complex). Component of the U4/U6-U5 tri-snRNP complex, a building block of the precatalytic spliceosome (spliceosome B complex). The U4/U6-U5 tri-snRNP complex is composed of the U4, U6 and U5 snRNAs and at least PRPF3, PRPF4, PRPF6, PRPF8, PRPF31, SNRNP200, TXNL4A, SNRNP40, SNRPB, SNRPD1, SNRPD2, SNRPD3, SNRPE, SNRPF, SNRPG, DDX23, CD2BP2, PPIH, SNU13, EFTUD2, SART1 and USP39, plus LSM2, LSM3, LSM4, LSM5, LSM6, LSM7 and LSM8. LSM2, LSM3, LSM4, LSM5, LSM6, LSM7 and LSM8 form a heptameric, ring-shaped subcomplex (the LSM2-8 complex) that is part of the U4/U6-U5 tri-snRNP complex and the precatalytic spliceosome. Interacts with TACC1.

The protein localises to the nucleus. Plays a role in pre-mRNA splicing as component of the U4/U6-U5 tri-snRNP complex that is involved in spliceosome assembly, and as component of the precatalytic spliceosome (spliceosome B complex). The heptameric LSM2-8 complex binds specifically to the 3'-terminal U-tract of U6 snRNA. The polypeptide is U6 snRNA-associated Sm-like protein LSm7 (LSM7) (Homo sapiens (Human)).